The following is a 205-amino-acid chain: MNKVFPQGENGYTAAESKAHPGGEAGGGHLCCSRRGACLSASLLLLLATVAALIALVTILGLPSCTPGAQACITLTNRTGFLCHDQRSCIPASGVCDGVRTCTHGEDEDESLCRDVPQSLPHFLVAHCGDPASWIYSDQKCDGTNNCGDCSDELSPVTVCPPCGPGWWRCPSTFFKYCDCIPRHLCRDHVQHCSDWSDEYACPGP.

The helical transmembrane segment at L43–P63 threads the bilayer. One can recognise an LDL-receptor class A 1 domain in the interval A71–R114. 6 disulfide bridges follow: C72-C89, C83-C102, C96-C113, C141-C160, C163-C180, and C170-C193. The 47-residue stretch at D115–P161 folds into the LDL-receptor class A 2; atypical domain. One can recognise an LDL-receptor class A 3; atypical domain in the interval P162–P203.

Belongs to the LDLR family.

The protein localises to the membrane. The chain is Low-density lipoprotein receptor class A domain-containing protein 1 (LDLRAD1) from Homo sapiens (Human).